The following is a 567-amino-acid chain: Oxygen-dependent choline dehydrogenase (567 aa).

4-33 (DYIIIGAGSAGNVLAARLTEDADVTVLLLE) contacts FAD. The active-site Proton acceptor is His-473.

Belongs to the GMC oxidoreductase family. FAD is required as a cofactor.

It carries out the reaction choline + A = betaine aldehyde + AH2. The catalysed reaction is betaine aldehyde + NAD(+) + H2O = glycine betaine + NADH + 2 H(+). It functions in the pathway amine and polyamine biosynthesis; betaine biosynthesis via choline pathway; betaine aldehyde from choline (cytochrome c reductase route): step 1/1. Functionally, involved in the biosynthesis of the osmoprotectant glycine betaine. Catalyzes the oxidation of choline to betaine aldehyde and betaine aldehyde to glycine betaine at the same rate. The protein is Oxygen-dependent choline dehydrogenase of Yersinia pseudotuberculosis serotype IB (strain PB1/+).